Reading from the N-terminus, the 466-residue chain is Ribulose bisphosphate carboxylase large chain (466 aa).

An N6,N6,N6-trimethyllysine modification is found at Lys5. Residues Asn114 and Thr164 each coordinate substrate. The active-site Proton acceptor is Lys166. Substrate is bound at residue Lys168. Mg(2+) is bound by residues Lys192, Asp194, and Glu195. Lys192 carries the N6-carboxylysine modification. His285 functions as the Proton acceptor in the catalytic mechanism. 3 residues coordinate substrate: Arg286, His318, and Ser370.

This sequence belongs to the RuBisCO large chain family. Type I subfamily. In terms of assembly, heterohexadecamer of 8 large chains and 8 small chains; disulfide-linked. The disulfide link is formed within the large subunit homodimers. Mg(2+) serves as cofactor. The disulfide bond which can form in the large chain dimeric partners within the hexadecamer appears to be associated with oxidative stress and protein turnover.

Its subcellular location is the plastid. It localises to the chloroplast. The enzyme catalyses 2 (2R)-3-phosphoglycerate + 2 H(+) = D-ribulose 1,5-bisphosphate + CO2 + H2O. It carries out the reaction D-ribulose 1,5-bisphosphate + O2 = 2-phosphoglycolate + (2R)-3-phosphoglycerate + 2 H(+). RuBisCO catalyzes two reactions: the carboxylation of D-ribulose 1,5-bisphosphate, the primary event in carbon dioxide fixation, as well as the oxidative fragmentation of the pentose substrate in the photorespiration process. Both reactions occur simultaneously and in competition at the same active site. This chain is Ribulose bisphosphate carboxylase large chain, found in Aesculus pavia (Red buckeye).